The following is an 854-amino-acid chain: Aryl hydrocarbon receptor (854 aa).

A propeptide spanning residues 1 to 9 is cleaved from the precursor; sequence MSSGANITY. The disordered stretch occupies residues 1-38; it reads MSSGANITYASRKRRKPVQKTVKPIPAEGIKSNPSKRH. Short sequence motifs (nuclear localization signal) lie at residues 12 to 15 and 36 to 41; these read RKRR and KRHRDR. Residues 26–79 enclose the bHLH domain; it reads PAEGIKSNPSKRHRDRLNTELDRLASLLPFPQDVINKLDKLSVLRLSVSYLRAK. The tract at residues 37 to 65 is DNA-binding; sequence RHRDRLNTELDRLASLLPFPQDVINKLDK. 3 required for maintaining the overall integrity of the AHR:ARNT heterodimer and its transcriptional activity regions span residues 49–81, 116–124, and 264–266; these read LASL…AKSF, LLQALNGFV, and FAI. Residues 63-71 carry the Nuclear export signal motif; that stretch reads LDKLSVLRL. One can recognise a PAS 1 domain in the interval 111 to 175; that stretch reads QEGEFLLQAL…AEFQRQLHWA (65 aa). One can recognise a PAS 2 domain in the interval 270–340; it reads LQPPSILEIR…CAESHIRMIK (71 aa). Positions 346-387 constitute a PAC domain; sequence MTVFRLLAKHSRWRWVQSNARLIYRNGRPDYIIATQRPLTDE. The tract at residues 425-451 is disordered; sequence LPIRTKSNTSRKDWAPQSTPSKDSFHP. Polar residues predominate over residues 440–451; the sequence is PQSTPSKDSFHP.

Homodimer. Heterodimer; efficient DNA binding requires dimerization with another bHLH protein. Interacts with ARNT; the heterodimer ARNT:AHR binds to core DNA sequence 5'-TGCGTG-3' within the dioxin response element (DRE) of target gene promoters and activates their transcription. Binds MYBBP1A. Interacts with coactivators including SRC-1, RIP140 and NOCA7, and with the corepressor SMRT. Interacts with NEDD8 and IVNS1ABP. Interacts with BMAL1. Interacts with HSP90AB1. Interacts with TIPARP; leading to mono-ADP-ribosylation of AHR and subsequent inhibition of AHR. Mono-ADP-ribosylated, leading to inhibit transcription activator activity of AHR.

Its subcellular location is the cytoplasm. It localises to the nucleus. Functionally, ligand-activated transcription factor that enables cells to adapt to changing conditions by sensing compounds from the environment, diet, microbiome and cellular metabolism, and which plays important roles in development, immunity and cancer. Upon ligand binding, translocates into the nucleus, where it heterodimerizes with ARNT and induces transcription by binding to xenobiotic response elements (XRE). Regulates a variety of biological processes, including angiogenesis, hematopoiesis, drug and lipid metabolism, cell motility and immune modulation. Xenobiotics can act as ligands: upon xenobiotic-binding, activates the expression of multiple phase I and II xenobiotic chemical metabolizing enzyme genes (such as the CYP1A1 gene). Mediates biochemical and toxic effects of halogenated aromatic hydrocarbons. Next to xenobiotics, natural ligands derived from plants, microbiota, and endogenous metabolism are potent AHR agonists. Tryptophan (Trp) derivatives constitute an important class of endogenous AHR ligands. Acts as a negative regulator of anti-tumor immunity: indoles and kynurenic acid generated by Trp catabolism act as ligand and activate AHR, thereby promoting AHR-driven cancer cell motility and suppressing adaptive immunity. Regulates the circadian clock by inhibiting the basal and circadian expression of the core circadian component PER1. Inhibits PER1 by repressing the CLOCK-BMAL1 heterodimer mediated transcriptional activation of PER1. The heterodimer ARNT:AHR binds to core DNA sequence 5'-TGCGTG-3' within the dioxin response element (DRE) of target gene promoters and activates their transcription. The protein is Aryl hydrocarbon receptor (Ahr) of Mus spicilegus (Steppe mouse).